Here is a 141-residue protein sequence, read N- to C-terminus: MAKKVEKLVKLQIPAGKATPAPPVGPALGQAGINIMGFTKEFNARTADQAGMIIPVVISVYEDKSFTFVTKTPPAAVLLKKAAGVEKGSGTPNKTKVATVTRAQVQQIAETKMPDLNAANIESAMRMIEGTARSMGFTVTD.

Belongs to the universal ribosomal protein uL11 family. In terms of assembly, part of the ribosomal stalk of the 50S ribosomal subunit. Interacts with L10 and the large rRNA to form the base of the stalk. L10 forms an elongated spine to which L12 dimers bind in a sequential fashion forming a multimeric L10(L12)X complex. Post-translationally, one or more lysine residues are methylated.

In terms of biological role, forms part of the ribosomal stalk which helps the ribosome interact with GTP-bound translation factors. The protein is Large ribosomal subunit protein uL11 of Streptococcus gordonii (strain Challis / ATCC 35105 / BCRC 15272 / CH1 / DL1 / V288).